The sequence spans 417 residues: Hydroxysteroid dehydrogenase-like protein 2 (417 aa).

NADP(+) contacts are provided by residues 17–23, Lys-42, and Asp-74; that span reads GASRGIG. Tyr-168 (proton acceptor) is an active-site residue. Lys-172 is an NADP(+) binding site. Residues 306–414 enclose the SCP2 domain; it reads ASPLQETFKA…KLEKILGQMN (109 aa).

This sequence belongs to the short-chain dehydrogenases/reductases (SDR) family.

It localises to the peroxisome. The protein resides in the mitochondrion. Its function is as follows. Has apparently no steroid dehydrogenase activity. Might act as a metabolic regulator that affects systemic adaptation to nutritional cues. The sequence is that of Hydroxysteroid dehydrogenase-like protein 2 (hsdl2) from Xenopus laevis (African clawed frog).